Here is a 394-residue protein sequence, read N- to C-terminus: 8-amino-7-oxononanoate synthase (394 aa).

Position 21 (Arg-21) interacts with substrate. Residue 112–113 participates in pyridoxal 5'-phosphate binding; the sequence is GY. His-137 provides a ligand contact to substrate. 3 residues coordinate pyridoxal 5'-phosphate: Ser-183, His-211, and Thr-239. At Lys-242 the chain carries N6-(pyridoxal phosphate)lysine. Residue Thr-358 coordinates substrate.

Belongs to the class-II pyridoxal-phosphate-dependent aminotransferase family. BioF subfamily. As to quaternary structure, homodimer. Requires pyridoxal 5'-phosphate as cofactor.

The catalysed reaction is 6-carboxyhexanoyl-[ACP] + L-alanine + H(+) = (8S)-8-amino-7-oxononanoate + holo-[ACP] + CO2. It functions in the pathway cofactor biosynthesis; biotin biosynthesis. Its function is as follows. Catalyzes the decarboxylative condensation of pimeloyl-[acyl-carrier protein] and L-alanine to produce 8-amino-7-oxononanoate (AON), [acyl-carrier protein], and carbon dioxide. The protein is 8-amino-7-oxononanoate synthase of Paraburkholderia xenovorans (strain LB400).